The following is a 329-amino-acid chain: GTPase Obg (329 aa).

An Obg domain is found at 1-159 (MQFIDQAIID…WSLQLELKLL (159 aa)). In terms of domain architecture, OBG-type G spans 160-328 (AEVGIIGLPN…LLSSIWYELG (169 aa)). Residues 166–173 (GLPNAGKS), 191–195 (FTTLI), 213–216 (DIPG), 280–283 (NKKE), and 309–311 (SAV) contribute to the ATP site. Mg(2+) is bound by residues S173 and T193.

It belongs to the TRAFAC class OBG-HflX-like GTPase superfamily. OBG GTPase family. In terms of assembly, monomer. Requires Mg(2+) as cofactor.

Its subcellular location is the cytoplasm. Its function is as follows. An essential GTPase which binds GTP, GDP and possibly (p)ppGpp with moderate affinity, with high nucleotide exchange rates and a fairly low GTP hydrolysis rate. Plays a role in control of the cell cycle, stress response, ribosome biogenesis and in those bacteria that undergo differentiation, in morphogenesis control. This is GTPase Obg from Prochlorococcus marinus (strain NATL1A).